A 96-amino-acid polypeptide reads, in one-letter code: Co-chaperonin GroES (96 aa).

It belongs to the GroES chaperonin family. Heptamer of 7 subunits arranged in a ring. Interacts with the chaperonin GroEL.

The protein localises to the cytoplasm. Its function is as follows. Together with the chaperonin GroEL, plays an essential role in assisting protein folding. The GroEL-GroES system forms a nano-cage that allows encapsulation of the non-native substrate proteins and provides a physical environment optimized to promote and accelerate protein folding. GroES binds to the apical surface of the GroEL ring, thereby capping the opening of the GroEL channel. The protein is Co-chaperonin GroES of Colwellia maris.